The primary structure comprises 144 residues: Glycine-rich protein HC1 (144 aa).

A helical transmembrane segment spans residues 5–25; sequence IFLLLGLSIAFAILISSEVAA. Repeat copies occupy residues 37 to 42, 43 to 48, 50 to 55, 56 to 61, 63 to 68, 69 to 74, 76 to 81, 82 to 87, 89 to 94, 102 to 107, and 108 to 113. An 11 X 6 AA tandem repeats of G-Y-[NH]-N-G -G region spans residues 37-113; it reads GYNNGGGYHN…NNGGGYHGGG (77 aa).

It belongs to the GRP family.

The protein resides in the membrane. This chain is Glycine-rich protein HC1, found in Oxybasis rubra (Red goosefoot).